The sequence spans 486 residues: Cobyric acid synthase (486 aa).

The GATase cobBQ-type domain occupies 248-439 (MLRVVVPVLP…VHGLFDTPAA (192 aa)). Cys-329 serves as the catalytic Nucleophile. His-431 is a catalytic residue.

The protein belongs to the CobB/CobQ family. CobQ subfamily.

It functions in the pathway cofactor biosynthesis; adenosylcobalamin biosynthesis. In terms of biological role, catalyzes amidations at positions B, D, E, and G on adenosylcobyrinic A,C-diamide. NH(2) groups are provided by glutamine, and one molecule of ATP is hydrogenolyzed for each amidation. This chain is Cobyric acid synthase, found in Paraburkholderia phytofirmans (strain DSM 17436 / LMG 22146 / PsJN) (Burkholderia phytofirmans).